Consider the following 540-residue polypeptide: Chaperonin GroEL 3 (540 aa).

ATP contacts are provided by residues 30–33, lysine 51, 87–91, glycine 415, 480–482, and aspartate 496; these read TLGP, DGTTT, and NAA.

It belongs to the chaperonin (HSP60) family. In terms of assembly, forms a cylinder of 14 subunits composed of two heptameric rings stacked back-to-back. Interacts with the co-chaperonin GroES.

The protein localises to the cytoplasm. The enzyme catalyses ATP + H2O + a folded polypeptide = ADP + phosphate + an unfolded polypeptide.. In terms of biological role, together with its co-chaperonin GroES, plays an essential role in assisting protein folding. The GroEL-GroES system forms a nano-cage that allows encapsulation of the non-native substrate proteins and provides a physical environment optimized to promote and accelerate protein folding. This is Chaperonin GroEL 3 from Bradyrhizobium sp. (strain BTAi1 / ATCC BAA-1182).